We begin with the raw amino-acid sequence, 127 residues long: Fluoride-specific ion channel FluC (127 aa).

The next 4 helical transmembrane spans lie at 7–27 (LLVA…GAWV), 31–51 (LGAG…FLIG), 68–88 (LFLA…SYET), and 97–117 (VGKA…LAFL). Na(+) is bound by residues Gly76 and Thr79.

This sequence belongs to the fluoride channel Fluc/FEX (TC 1.A.43) family.

It localises to the cell inner membrane. It carries out the reaction fluoride(in) = fluoride(out). Its activity is regulated as follows. Na(+) is not transported, but it plays an essential structural role and its presence is essential for fluoride channel function. Its function is as follows. Fluoride-specific ion channel. Important for reducing fluoride concentration in the cell, thus reducing its toxicity. The polypeptide is Fluoride-specific ion channel FluC (Thermus thermophilus (strain ATCC BAA-163 / DSM 7039 / HB27)).